We begin with the raw amino-acid sequence, 404 residues long: MDTQAFKRSLHHSDRYNRRGFESPTKRAQALEKAYQSNLIGSIRDNGYLFEHGRLRVKLAEAFGFCWGVERAVAMAYETRRHYPKESIWITNEIIHNPSVNDHLRNMNVRFISAEKGIKNFSSVQEGDVVILPAFGATVQEMKLLHERGCHIIDTTCPWVSKVWHTVEKHKKHEFTSIIHGKVKHEETLATSSFAGTYLVVLDLEEAQYVANYILGKGDREEFLKRFSKASSQGFDPDRDLQRLGVANQTTMLKSETEEIGRLFEKTMLRKYGPAELTEHFLAFNTICDATEERQDAMFSLVDEPLDLLVVIGGFNSSNTTHLQEIAISRGIRSFHIDTPERIGDQENTITHKPLGDDLITEKNFLPEGNISVGITSGASTPDRVVEHVIHKLINLSEEKAFVD.

Cysteine 66 lines the [4Fe-4S] cluster pocket. Histidine 96 is a (2E)-4-hydroxy-3-methylbut-2-enyl diphosphate binding site. Position 96 (histidine 96) interacts with dimethylallyl diphosphate. Histidine 96 is an isopentenyl diphosphate binding site. [4Fe-4S] cluster is bound at residue cysteine 157. (2E)-4-hydroxy-3-methylbut-2-enyl diphosphate is bound at residue histidine 185. Histidine 185 contributes to the dimethylallyl diphosphate binding site. Histidine 185 contacts isopentenyl diphosphate. Residue glutamate 187 is the Proton donor of the active site. Threonine 250 serves as a coordination point for (2E)-4-hydroxy-3-methylbut-2-enyl diphosphate. Residue cysteine 288 participates in [4Fe-4S] cluster binding. (2E)-4-hydroxy-3-methylbut-2-enyl diphosphate contacts are provided by serine 317, serine 318, asparagine 319, and serine 380. The dimethylallyl diphosphate site is built by serine 317, serine 318, asparagine 319, and serine 380. Isopentenyl diphosphate contacts are provided by serine 317, serine 318, asparagine 319, and serine 380.

It belongs to the IspH family. [4Fe-4S] cluster serves as cofactor.

The catalysed reaction is isopentenyl diphosphate + 2 oxidized [2Fe-2S]-[ferredoxin] + H2O = (2E)-4-hydroxy-3-methylbut-2-enyl diphosphate + 2 reduced [2Fe-2S]-[ferredoxin] + 2 H(+). The enzyme catalyses dimethylallyl diphosphate + 2 oxidized [2Fe-2S]-[ferredoxin] + H2O = (2E)-4-hydroxy-3-methylbut-2-enyl diphosphate + 2 reduced [2Fe-2S]-[ferredoxin] + 2 H(+). It functions in the pathway isoprenoid biosynthesis; dimethylallyl diphosphate biosynthesis; dimethylallyl diphosphate from (2E)-4-hydroxy-3-methylbutenyl diphosphate: step 1/1. The protein operates within isoprenoid biosynthesis; isopentenyl diphosphate biosynthesis via DXP pathway; isopentenyl diphosphate from 1-deoxy-D-xylulose 5-phosphate: step 6/6. In terms of biological role, catalyzes the conversion of 1-hydroxy-2-methyl-2-(E)-butenyl 4-diphosphate (HMBPP) into a mixture of isopentenyl diphosphate (IPP) and dimethylallyl diphosphate (DMAPP). Acts in the terminal step of the DOXP/MEP pathway for isoprenoid precursor biosynthesis. This is 4-hydroxy-3-methylbut-2-enyl diphosphate reductase from Prochlorococcus marinus (strain MIT 9211).